The following is a 425-amino-acid chain: UDP-N-acetylglucosamine 1-carboxyvinyltransferase (425 aa).

22–23 (KN) provides a ligand contact to phosphoenolpyruvate. A UDP-N-acetyl-alpha-D-glucosamine-binding site is contributed by Arg98. Cys122 (proton donor) is an active-site residue. Residue Cys122 is modified to 2-(S-cysteinyl)pyruvic acid O-phosphothioketal. UDP-N-acetyl-alpha-D-glucosamine is bound by residues 127 to 131 (RPVDQ), Asp313, and Ile335.

It belongs to the EPSP synthase family. MurA subfamily.

It is found in the cytoplasm. The catalysed reaction is phosphoenolpyruvate + UDP-N-acetyl-alpha-D-glucosamine = UDP-N-acetyl-3-O-(1-carboxyvinyl)-alpha-D-glucosamine + phosphate. The protein operates within cell wall biogenesis; peptidoglycan biosynthesis. In terms of biological role, cell wall formation. Adds enolpyruvyl to UDP-N-acetylglucosamine. This chain is UDP-N-acetylglucosamine 1-carboxyvinyltransferase, found in Xylella fastidiosa (strain 9a5c).